A 219-amino-acid chain; its full sequence is MCTTISISISTIKPTEIFQEILGSSYSRKLLFHTHDQSPTPAPSPYVGDNNFDANVVMVLSVLLCALVCSLGLNSIIRCALRCSNLVPSEAGGDNYPVRLTNTGVKRKALKSFQTVSYSTELNLPGLDTECAICLSEFVAEERVKLLPTCHHGFHVRCIDKWLSSHSSCPTCRHCLIQTCEKIADCSQTSSLNSTQPPQDSIILQIAPLEPERWIRWFR.

A helical transmembrane segment spans residues 57–77 (VMVLSVLLCALVCSLGLNSII). The RING-type; atypical zinc-finger motif lies at 131–173 (CAICLSEFVAEERVKLLPTCHHGFHVRCIDKWLSSHSSCPTCR).

It belongs to the RING-type zinc finger family. ATL subfamily.

The protein resides in the membrane. The catalysed reaction is S-ubiquitinyl-[E2 ubiquitin-conjugating enzyme]-L-cysteine + [acceptor protein]-L-lysine = [E2 ubiquitin-conjugating enzyme]-L-cysteine + N(6)-ubiquitinyl-[acceptor protein]-L-lysine.. Its pathway is protein modification; protein ubiquitination. In Arabidopsis thaliana (Mouse-ear cress), this protein is RING-H2 finger protein ATL78 (ATL78).